Consider the following 697-residue polypeptide: Ribosomal RNA large subunit methyltransferase K/L (697 aa).

Positions 43-154 (ILYNSLMWSR…QNLVHIMLDL (112 aa)) constitute a THUMP domain.

It belongs to the methyltransferase superfamily. RlmKL family.

The protein resides in the cytoplasm. It carries out the reaction guanosine(2445) in 23S rRNA + S-adenosyl-L-methionine = N(2)-methylguanosine(2445) in 23S rRNA + S-adenosyl-L-homocysteine + H(+). It catalyses the reaction guanosine(2069) in 23S rRNA + S-adenosyl-L-methionine = N(2)-methylguanosine(2069) in 23S rRNA + S-adenosyl-L-homocysteine + H(+). Specifically methylates the guanine in position 2445 (m2G2445) and the guanine in position 2069 (m7G2069) of 23S rRNA. This Buchnera aphidicola subsp. Schizaphis graminum (strain Sg) protein is Ribosomal RNA large subunit methyltransferase K/L.